The primary structure comprises 524 residues: GMP synthase [glutamine-hydrolyzing] (524 aa).

The 199-residue stretch at 8 to 206 (KILILDFGSQ…VRKLCQCEAR (199 aa)) folds into the Glutamine amidotransferase type-1 domain. The active-site Nucleophile is C85. Residues H180 and E182 contribute to the active site. The 193-residue stretch at 207–399 (WTTGNIVEDA…LGLPYEMVYR (193 aa)) folds into the GMPS ATP-PPase domain. Position 234 to 240 (234 to 240 (SGGVDSS)) interacts with ATP.

In terms of assembly, homodimer.

The catalysed reaction is XMP + L-glutamine + ATP + H2O = GMP + L-glutamate + AMP + diphosphate + 2 H(+). The protein operates within purine metabolism; GMP biosynthesis; GMP from XMP (L-Gln route): step 1/1. Catalyzes the synthesis of GMP from XMP. This chain is GMP synthase [glutamine-hydrolyzing], found in Methylococcus capsulatus (strain ATCC 33009 / NCIMB 11132 / Bath).